Consider the following 611-residue polypeptide: ATP-dependent zinc metalloprotease FtsH (611 aa).

Position 1 (Met1) is a topological domain, cytoplasmic. Residues 2 to 22 form a helical membrane-spanning segment; it reads VKNLIFWLVITVVLMSIFQNF. The Extracellular portion of the chain corresponds to 23 to 98; the sequence is NTNDVNNHKV…IGAIPEEPSL (76 aa). Residues 99–119 form a helical membrane-spanning segment; sequence FISILISWFPMLLLIGVWIFF. The Cytoplasmic portion of the chain corresponds to 120 to 611; the sequence is MRQMQMGGGK…KGWIETDTNK (492 aa). Position 192 to 199 (192 to 199) interacts with ATP; it reads GPPGTGKT. His414 serves as a coordination point for Zn(2+). Residue Glu415 is part of the active site. The Zn(2+) site is built by His418 and Asp492.

The protein in the central section; belongs to the AAA ATPase family. This sequence in the C-terminal section; belongs to the peptidase M41 family. Homohexamer. Zn(2+) serves as cofactor.

It is found in the cell membrane. In terms of biological role, acts as a processive, ATP-dependent zinc metallopeptidase for both cytoplasmic and membrane proteins. Plays a role in the quality control of integral membrane proteins. This is ATP-dependent zinc metalloprotease FtsH from Buchnera aphidicola subsp. Acyrthosiphon pisum (strain APS) (Acyrthosiphon pisum symbiotic bacterium).